The sequence spans 142 residues: Hemoglobin subunit alpha (142 aa).

Serine 1 is modified (N-acetylserine). The Globin domain maps to 1–142; it reads SLSDKDKADV…LALALGQKYR (142 aa). An O2-binding site is contributed by histidine 58. Residue histidine 88 coordinates heme b.

It belongs to the globin family. Heterotetramer of two alpha chains and two beta chains. Red blood cells.

Involved in oxygen transport from gills to the various peripheral tissues. The sequence is that of Hemoglobin subunit alpha (hba) from Catostomus clarkii (Desert sucker).